Reading from the N-terminus, the 139-residue chain is Large ribosomal subunit protein bL17 (139 aa).

Positions 117 to 139 (DRDPEAKGQDSGPVEIKDESEEG) are disordered.

This sequence belongs to the bacterial ribosomal protein bL17 family. In terms of assembly, part of the 50S ribosomal subunit. Contacts protein L32.

The chain is Large ribosomal subunit protein bL17 from Rhodospirillum centenum (strain ATCC 51521 / SW).